The following is a 466-amino-acid chain: Exodeoxyribonuclease 7 large subunit (466 aa).

It belongs to the XseA family. As to quaternary structure, heterooligomer composed of large and small subunits.

Its subcellular location is the cytoplasm. The catalysed reaction is Exonucleolytic cleavage in either 5'- to 3'- or 3'- to 5'-direction to yield nucleoside 5'-phosphates.. Functionally, bidirectionally degrades single-stranded DNA into large acid-insoluble oligonucleotides, which are then degraded further into small acid-soluble oligonucleotides. This chain is Exodeoxyribonuclease 7 large subunit, found in Ruthia magnifica subsp. Calyptogena magnifica.